Consider the following 161-residue polypeptide: Pleiotrophin-B (161 aa).

A signal peptide spans 1–23 (MHHQHGLFMLALLAFLLVMTVLG). 5 disulfides stabilise this stretch: C41–C70, C49–C79, C56–C83, C93–C125, and C103–C135. Chondroitin sulfate binding stretches follow at residues 86–93 (KKQFGAEC) and 117–125 (KRALHNAEC). Residues 136–161 (GKVTKPKLQESKKKKKEGKNKEKLLD) are disordered. Residues 141–161 (PKLQESKKKKKEGKNKEKLLD) are chondroitin sulfate A binding.

This sequence belongs to the pleiotrophin family. In terms of tissue distribution, expressed in high levels in brain and eye. Lower levels in bone. In the tailbud embryo stage, it is expressed exclusively in the central nervous system, especially in the hind region of the brain.

The protein localises to the secreted. Functionally, secreted growth factor that mediates its signal through cell-surface proteoglycan and non-proteoglycan receptors. Binds cell-surface proteoglycan receptor via their chondroitin sulfate (CS) groups. Thereby regulates many processes like cell proliferation, cell survival, cell growth, cell differentiation and cell migration. Has antibacterial activity against both Gram-positive and Gram-negative bacteria. This chain is Pleiotrophin-B (ptn-b), found in Xenopus laevis (African clawed frog).